Consider the following 1733-residue polypeptide: Gag-Pol polyprotein (1733 aa).

Glycine 2 is lipidated: N-myristoyl glycine; by host. A PTAP/PSAP motif motif is present at residues 109 to 112 (PTAP). Residues 128-132 (LYPAL) carry the LYPX(n)L motif motif. 3 disordered regions span residues 139–218 (KPPK…LRMG), 449–497 (KEER…RPQL), and 511–549 (WAKD…PEPR). The PPXY motif signature appears at 161–164 (PPPY). Position 190 is a phosphoserine; by host (serine 190). The stretch at 436–476 (EEREERIRREIEEKEERRRAEDEQRERERDRRRHREMSKLL) forms a coiled coil. 2 stretches are compositionally biased toward basic and acidic residues: residues 449 to 464 (KEER…ERER) and 484 to 497 (RQDR…RPQL). Residues 500 to 517 (DQCAYCKEKGHWAKDCPK) form a CCHC-type zinc finger. Positions 526–535 (RPQTSLLTLG) are enriched in low complexity. Residues 559–629 (VTFLVDTGAQ…CPYPLLGRDL (71 aa)) enclose the Peptidase A2 domain. The active-site Protease; shared with dimeric partner is aspartate 564. 4 residues coordinate RNA: tyrosine 721, aspartate 771, arginine 773, and proline 787. Positions 739 to 930 (LDQGILVPCQ…KQVKYLGYLL (192 aa)) constitute a Reverse transcriptase domain. Aspartate 807 is a binding site for Mg(2+). RNA contacts are provided by asparagine 851 and proline 853. Residues aspartate 881 and aspartate 882 each contribute to the Mg(2+) site. DNA is bound by residues arginine 941, arginine 955, arginine 958, and phenylalanine 966. 2 residues coordinate RNA: lysine 1054 and lysine 1055. Tryptophan 1063 is a DNA binding site. Lysine 1082 lines the RNA pocket. Arginine 1113 lines the DNA pocket. Residues 1172-1318 (PDADYTWYTD…ADQAAREAAM (147 aa)) enclose the RNase H type-1 domain. Aspartate 1181 provides a ligand contact to Mg(2+). Positions 1184 and 1186 each coordinate RNA. DNA-binding residues include glutamine 1187, serine 1214, and glutamine 1216. Glutamate 1219 and aspartate 1240 together coordinate Mg(2+). The RNA site is built by arginine 1242 and arginine 1266. Residues aspartate 1310, aspartate 1453, and aspartate 1512 each coordinate Mg(2+). The region spanning 1442 to 1600 (RGHRPGTHWE…TPYEILYGAP (159 aa)) is the Integrase catalytic domain.

As to quaternary structure, homohexamer, that further associates as homomultimer. The virus core is composed of a lattice formed from hexagonal rings, each containing six capsid monomers. The protease is a homodimer, whose active site consists of two apposed aspartic acid residues. The reverse transcriptase is a monomer. Interacts (via PPXY motif) with host NEDD4. Interacts (via PSAP motif) with host TSG101. Interacts (via LYPX(n)L motif) with host PDCD6IP. In terms of assembly, the reverse transcriptase is a monomer (Potential). Interacts (via RNase domains) with host release factor ETF1; this interaction is essential for translational readthrough of amber codon between viral gag and pol genes, as well as for viral replication. As to quaternary structure, homodimer. Requires Mg(2+) as cofactor. The cofactor is Mn(2+). Post-translationally, specific enzymatic cleavages by the viral protease yield mature proteins. The protease is released by autocatalytic cleavage. The polyprotein is cleaved during and after budding, this process is termed maturation. Sumoylated; which is required for virus replication. In terms of processing, phosphorylated on serine residues.

It localises to the host cell membrane. It is found in the virion. It carries out the reaction DNA(n) + a 2'-deoxyribonucleoside 5'-triphosphate = DNA(n+1) + diphosphate. The enzyme catalyses Endonucleolytic cleavage to 5'-phosphomonoester.. In terms of biological role, plays a role in budding and is processed by the viral protease during virion maturation outside the cell. During budding, it recruits, in a PPXY-dependent or independent manner, Nedd4-like ubiquitin ligases that conjugate ubiquitin molecules to Gag, or to Gag binding host factors. Interaction with HECT ubiquitin ligases probably link the viral protein to the host ESCRT pathway and facilitate release. Functionally, targets Gag and gag-pol polyproteins to the plasma membrane via a multipartite membrane binding signal, that includes its myristoylated N-terminus. Also mediates nuclear localization of the pre-integration complex. Its function is as follows. Forms the spherical core of the virion that encapsulates the genomic RNA-nucleocapsid complex. Involved in the packaging and encapsidation of two copies of the genome. Binds with high affinity to conserved UCUG elements within the packaging signal, located near the 5'-end of the genome. This binding is dependent on genome dimerization. Acts as a nucleic acid chaperone which is involved in rearrangement of nucleic acid secondary structures during gRNA retrotranscription. In terms of biological role, the aspartyl protease mediates proteolytic cleavages of Gag and Gag-Pol polyproteins during or shortly after the release of the virion from the plasma membrane. Cleavages take place as an ordered, step-wise cascade to yield mature proteins. This process is called maturation. Displays maximal activity during the budding process just prior to particle release from the cell. Functionally, RT is a multifunctional enzyme that converts the viral dimeric RNA genome into dsDNA in the cytoplasm, shortly after virus entry into the cell. This enzyme displays a DNA polymerase activity that can copy either DNA or RNA templates, and a ribonuclease H (RNase H) activity that cleaves the RNA strand of RNA-DNA heteroduplexes in a partially processive 3' to 5' endonucleasic mode. Conversion of viral genomic RNA into dsDNA requires many steps. A tRNA binds to the primer-binding site (PBS) situated at the 5' end of the viral RNA. RT uses the 3' end of the tRNA primer to perform a short round of RNA-dependent minus-strand DNA synthesis. The reading proceeds through the U5 region and ends after the repeated (R) region which is present at both ends of viral RNA. The portion of the RNA-DNA heteroduplex is digested by the RNase H, resulting in a ssDNA product attached to the tRNA primer. This ssDNA/tRNA hybridizes with the identical R region situated at the 3' end of viral RNA. This template exchange, known as minus-strand DNA strong stop transfer, can be either intra- or intermolecular. RT uses the 3' end of this newly synthesized short ssDNA to perform the RNA-dependent minus-strand DNA synthesis of the whole template. RNase H digests the RNA template except for a polypurine tract (PPT) situated at the 5' end of the genome. It is not clear if both polymerase and RNase H activities are simultaneous. RNase H probably can proceed both in a polymerase-dependent (RNA cut into small fragments by the same RT performing DNA synthesis) and a polymerase-independent mode (cleavage of remaining RNA fragments by free RTs). Secondly, RT performs DNA-directed plus-strand DNA synthesis using the PPT that has not been removed by RNase H as primers. PPT and tRNA primers are then removed by RNase H. The 3' and 5' ssDNA PBS regions hybridize to form a circular dsDNA intermediate. Strand displacement synthesis by RT to the PBS and PPT ends produces a blunt ended, linear dsDNA copy of the viral genome that includes long terminal repeats (LTRs) at both ends. Its function is as follows. Catalyzes viral DNA integration into the host chromosome, by performing a series of DNA cutting and joining reactions. This enzyme activity takes place after virion entry into a cell and reverse transcription of the RNA genome in dsDNA. The first step in the integration process is 3' processing. This step requires a complex comprising the viral genome, matrix protein and integrase. This complex is called the pre-integration complex (PIC). The integrase protein removes 2 nucleotides from each 3' end of the viral DNA, leaving recessed CA OH's at the 3' ends. In the second step that requires cell division, the PIC enters cell nucleus. In the third step, termed strand transfer, the integrase protein joins the previously processed 3' ends to the 5' ends of strands of target cellular DNA at the site of integration. The last step is viral DNA integration into host chromosome. In Homo sapiens (Human), this protein is Gag-Pol polyprotein (gag-pol).